Here is a 117-residue protein sequence, read N- to C-terminus: Large ribosomal subunit protein bL20 (117 aa).

It belongs to the bacterial ribosomal protein bL20 family.

Functionally, binds directly to 23S ribosomal RNA and is necessary for the in vitro assembly process of the 50S ribosomal subunit. It is not involved in the protein synthesizing functions of that subunit. In Acetivibrio thermocellus (strain ATCC 27405 / DSM 1237 / JCM 9322 / NBRC 103400 / NCIMB 10682 / NRRL B-4536 / VPI 7372) (Clostridium thermocellum), this protein is Large ribosomal subunit protein bL20.